The chain runs to 401 residues: 8-amino-7-oxononanoate synthase (401 aa).

Arginine 24 contacts substrate. 111-112 (GF) provides a ligand contact to pyridoxal 5'-phosphate. Histidine 137 is a binding site for substrate. The pyridoxal 5'-phosphate site is built by serine 183, histidine 211, and threonine 240. Lysine 243 bears the N6-(pyridoxal phosphate)lysine mark. Substrate is bound at residue threonine 357.

It belongs to the class-II pyridoxal-phosphate-dependent aminotransferase family. BioF subfamily. Homodimer. It depends on pyridoxal 5'-phosphate as a cofactor.

It catalyses the reaction 6-carboxyhexanoyl-[ACP] + L-alanine + H(+) = (8S)-8-amino-7-oxononanoate + holo-[ACP] + CO2. It participates in cofactor biosynthesis; biotin biosynthesis. Functionally, catalyzes the decarboxylative condensation of pimeloyl-[acyl-carrier protein] and L-alanine to produce 8-amino-7-oxononanoate (AON), [acyl-carrier protein], and carbon dioxide. In Xanthomonas campestris pv. campestris (strain B100), this protein is 8-amino-7-oxononanoate synthase.